Here is a 332-residue protein sequence, read N- to C-terminus: Biotin synthase (332 aa).

Residues 46-275 form the Radical SAM core domain; the sequence is SDIQRASLLS…RARVRLSAGR (230 aa). [4Fe-4S] cluster-binding residues include Cys61, Cys65, and Cys68. The [2Fe-2S] cluster site is built by Cys106, Cys138, Cys198, and Arg270.

Belongs to the radical SAM superfamily. Biotin synthase family. In terms of assembly, homodimer. The cofactor is [4Fe-4S] cluster. It depends on [2Fe-2S] cluster as a cofactor.

The enzyme catalyses (4R,5S)-dethiobiotin + (sulfur carrier)-SH + 2 reduced [2Fe-2S]-[ferredoxin] + 2 S-adenosyl-L-methionine = (sulfur carrier)-H + biotin + 2 5'-deoxyadenosine + 2 L-methionine + 2 oxidized [2Fe-2S]-[ferredoxin]. The protein operates within cofactor biosynthesis; biotin biosynthesis; biotin from 7,8-diaminononanoate: step 2/2. In terms of biological role, catalyzes the conversion of dethiobiotin (DTB) to biotin by the insertion of a sulfur atom into dethiobiotin via a radical-based mechanism. In Methylobacterium sp. (strain 4-46), this protein is Biotin synthase.